The chain runs to 124 residues: Histone H2A (124 aa).

Residues 1-18 (MSGRGKGGKAKGKSKTRS) are compositionally biased toward basic residues. The tract at residues 1–23 (MSGRGKGGKAKGKSKTRSSRAGL) is disordered. S2 is subject to N-acetylserine. S2 bears the Phosphoserine mark. Q104 bears the N5-methylglutamine mark.

Belongs to the histone H2A family. In terms of assembly, the nucleosome is a histone octamer containing two molecules each of H2A, H2B, H3 and H4 assembled in one H3-H4 heterotetramer and two H2A-H2B heterodimers. The octamer wraps approximately 147 bp of DNA. Post-translationally, phosphorylation of Ser-2 directly represses transcription.

The protein localises to the nucleus. It is found in the chromosome. In terms of biological role, core component of nucleosome. Nucleosomes wrap and compact DNA into chromatin, limiting DNA accessibility to the cellular machineries which require DNA as a template. Histones thereby play a central role in transcription regulation, DNA repair, DNA replication and chromosomal stability. DNA accessibility is regulated via a complex set of post-translational modifications of histones, also called histone code, and nucleosome remodeling. The chain is Histone H2A from Platynereis dumerilii (Dumeril's clam worm).